A 687-amino-acid chain; its full sequence is Polyphosphate kinase (687 aa).

Asparagine 45 provides a ligand contact to ATP. Mg(2+) contacts are provided by arginine 375 and arginine 405. Histidine 435 acts as the Phosphohistidine intermediate in catalysis. Positions 472, 568, and 596 each coordinate ATP.

Belongs to the polyphosphate kinase 1 (PPK1) family. Mg(2+) serves as cofactor. Post-translationally, an intermediate of this reaction is the autophosphorylated ppk in which a phosphate is covalently linked to a histidine residue through a N-P bond.

The enzyme catalyses [phosphate](n) + ATP = [phosphate](n+1) + ADP. Its function is as follows. Catalyzes the reversible transfer of the terminal phosphate of ATP to form a long-chain polyphosphate (polyP). The polypeptide is Polyphosphate kinase (Paraburkholderia phytofirmans (strain DSM 17436 / LMG 22146 / PsJN) (Burkholderia phytofirmans)).